We begin with the raw amino-acid sequence, 382 residues long: Na(+)/H(+) antiporter NhaA 2 (382 aa).

The next 12 membrane-spanning stretches (helical) occupy residues 7–27 (AGGVLLIAASILALIFANSYL), 28–48 (SGFYNGVLNLPLVVAIGAFEI), 52–72 (LLLWVNDGLMALFFLMVGLEV), 88–108 (VLPGLAALAGVAFPAIIYASF), 118–138 (GWAIPSATDIAFALGVFSLFG), 147–167 (LFLLSVAIFDDIAAIVIIALF), 170–190 (HELSTLSLLVAGIGIVMLFVL), 206–226 (LVVWAAVLKSGVHATLAGFVI), 254–274 (VAYFILPFFAFVNAGVHLGGI), 285–305 (LGIIVGLFVGKQLGIFSVCWL), 325–345 (GVCLLAGIGFTMSLFIGSLAF), and 356–376 (VKLGVLFGSLLSAICGALILT).

This sequence belongs to the NhaA Na(+)/H(+) (TC 2.A.33) antiporter family.

Its subcellular location is the cell inner membrane. The catalysed reaction is Na(+)(in) + 2 H(+)(out) = Na(+)(out) + 2 H(+)(in). Na(+)/H(+) antiporter that extrudes sodium in exchange for external protons. The sequence is that of Na(+)/H(+) antiporter NhaA 2 from Saccharophagus degradans (strain 2-40 / ATCC 43961 / DSM 17024).